Here is a 529-residue protein sequence, read N- to C-terminus: Lysine--tRNA ligase (529 aa).

Positions 29–37 (ISGSVHIGN) match the 'HIGH' region motif. The short motif at 274 to 278 (AMSKS) is the 'KMSKS' region element. Residue Lys277 participates in ATP binding.

This sequence belongs to the class-I aminoacyl-tRNA synthetase family.

The protein localises to the cytoplasm. The catalysed reaction is tRNA(Lys) + L-lysine + ATP = L-lysyl-tRNA(Lys) + AMP + diphosphate. The chain is Lysine--tRNA ligase from Methanosphaera stadtmanae (strain ATCC 43021 / DSM 3091 / JCM 11832 / MCB-3).